Reading from the N-terminus, the 319-residue chain is Free fatty acid receptor 3 (319 aa).

Topologically, residues 1–15 (MGTSFFLGNYWLFFS) are extracellular. The helical transmembrane segment at 16-36 (VYLLVFLVGLPLNVMALVVFV) threads the bilayer. Residues 37-43 (GKLRRRP) lie on the Cytoplasmic side of the membrane. A helical membrane pass occupies residues 44–64 (VAVDLLLLNLTISDLLLLLFL). Topologically, residues 65–98 (PFRMVEAACGMRWLLPFIFCPLSGFLFFTTIYLT) are extracellular. A disulfide bridge links C84 with C165. Residues 99 to 119 (SLFLTAVSIERFLSVAYPLWY) traverse the membrane as a helical segment. Residues 120 to 127 (KTRPRLAQ) lie on the Cytoplasmic side of the membrane. The chain crosses the membrane as a helical span at residues 128 to 148 (AGLVSVVCWFLASAHCSVVYI). Over 149–183 (TEYWGNATYSQGTNGTCYLEFREDQLAILLPVRLE) the chain is Extracellular. N-linked (GlcNAc...) asparagine glycans are attached at residues N154 and N162. A helical transmembrane segment spans residues 184–206 (MAVVLFMVPLCITSYCYSRLVWI). Topologically, residues 207-218 (LSRGASRRRRKR) are cytoplasmic. Residues 219–239 (IMGLLAATLLIFFVCFGPYNM) form a helical membrane-spanning segment. At 240-254 (SHVVGYVSRESPSWR) the chain is on the extracellular side. Residues 255–275 (SYVLLLSTLNSCIDPLVFYFS) traverse the membrane as a helical segment. The Cytoplasmic portion of the chain corresponds to 276-319 (SSKFQADFHQLLGRLLRTCVPWTQQVSLELKVKNGEEPSKECPS).

Belongs to the G-protein coupled receptor 1 family. Expressed in white adipose tissue and skeletal muscle (at protein level). Abundantly expressed in sympathetic ganglia such as the superior cervical ganglion. Also expressed by intestinal endocrine cells.

It localises to the cell membrane. Its function is as follows. G protein-coupled receptor that is activated by a major product of dietary fiber digestion, the short chain fatty acids (SCFAs), and that plays a role in the regulation of whole-body energy homeostasis and in intestinal immunity. In omnivorous mammals, the short chain fatty acids acetate, propionate and butyrate are produced primarily by the gut microbiome that metabolizes dietary fibers. SCFAs serve as a source of energy but also act as signaling molecules. That G protein-coupled receptor is probably coupled to the pertussis toxin-sensitive, G(i/o)-alpha family of G proteins. Its activation results in the formation of inositol 1,4,5-trisphosphate, the mobilization of intracellular calcium, the phosphorylation of the MAPK3/ERK1 and MAPK1/ERK2 kinases and the inhibition of intracellular cAMP accumulation. Activated by SCFAs and by beta-hydroxybutyrate, a ketone body produced by the liver upon starvation, it inhibits N-type calcium channels and modulates the activity of sympathetic neurons through a signaling cascade involving the beta and gamma subunits of its coupled G protein, phospholipase C and MAP kinases. Thereby, it may regulate energy expenditure through the control of the sympathetic nervous system that controls for instance heart rate. Upon activation by SCFAs accumulating in the intestine, it may also signal to the brain via neural circuits which in turn would regulate intestinal gluconeogenesis. May also control the production of hormones involved in whole-body energy homeostasis. May for instance, regulate blood pressure through renin secretion. May also regulate secretion of the PYY peptide by enteroendocrine cells and control gut motility, intestinal transit rate, and the harvesting of energy from SCFAs produced by gut microbiota. May also indirectly regulate the production of LEP/Leptin, a hormone acting on the CNS to inhibit food intake, in response to the presence of short-chain fatty acids in the intestine. Finally, may also play a role in glucose homeostasis. Besides its role in energy homeostasis, may play a role in intestinal immunity. May mediate the activation of the inflammatory and immune response by SCFAs in the gut, regulating the rapid production of chemokines and cytokines by intestinal epithelial cells. Exhibits an SCFA-independent constitutive G protein-coupled receptor activity. The chain is Free fatty acid receptor 3 (Ffar3) from Mus musculus (Mouse).